The following is a 425-amino-acid chain: Diacetylchitobiose binding protein DasA (425 aa).

A signal peptide spans 1-20; that stretch reads MKRKLIAAIGIAGMMVSIAA. Residue Cys-21 is the site of N-palmitoyl cysteine attachment. A lipid anchor (S-diacylglycerol cysteine) is attached at Cys-21.

Belongs to the bacterial solute-binding protein 1 family. As to quaternary structure, the complex is composed of two ATP-binding proteins (MsiK), two transmembrane proteins (DasB and DasC) and a solute-binding protein (DasA).

It is found in the cell membrane. Functionally, part of the ABC transporter complex DasABC-MsiK involved in N,N'-diacetylchitobiose ((GlcNAc)2) uptake. Binds specifically to (GlcNAc)2. Can also bind to GlcNAc, (GlcNAc)3, (GlcNAc)4 and (GlcNAc)5, but it exhibits the highest affinity for (GlcNAc)2. Involved in the control of morphological differentiation. The protein is Diacetylchitobiose binding protein DasA of Streptomyces coelicolor (strain ATCC BAA-471 / A3(2) / M145).